Here is a 192-residue protein sequence, read N- to C-terminus: Imidazoleglycerol-phosphate dehydratase (192 aa).

This sequence belongs to the imidazoleglycerol-phosphate dehydratase family.

It localises to the cytoplasm. The enzyme catalyses D-erythro-1-(imidazol-4-yl)glycerol 3-phosphate = 3-(imidazol-4-yl)-2-oxopropyl phosphate + H2O. The protein operates within amino-acid biosynthesis; L-histidine biosynthesis; L-histidine from 5-phospho-alpha-D-ribose 1-diphosphate: step 6/9. The protein is Imidazoleglycerol-phosphate dehydratase of Vesicomyosocius okutanii subsp. Calyptogena okutanii (strain HA).